A 513-amino-acid polypeptide reads, in one-letter code: Histidine ammonia-lyase (513 aa).

Positions 143–145 (ASG) form a cross-link, 5-imidazolinone (Ala-Gly). Ser144 bears the 2,3-didehydroalanine (Ser) mark.

It belongs to the PAL/histidase family. Post-translationally, contains an active site 4-methylidene-imidazol-5-one (MIO), which is formed autocatalytically by cyclization and dehydration of residues Ala-Ser-Gly.

It localises to the cytoplasm. It carries out the reaction L-histidine = trans-urocanate + NH4(+). It functions in the pathway amino-acid degradation; L-histidine degradation into L-glutamate; N-formimidoyl-L-glutamate from L-histidine: step 1/3. This is Histidine ammonia-lyase from Xanthomonas axonopodis pv. citri (strain 306).